The sequence spans 559 residues: Potassium-transporting ATPase potassium-binding subunit (559 aa).

Transmembrane regions (helical) follow at residues 5 to 25 (GFLL…PLGV), 63 to 83 (LLAI…MLLG), 132 to 152 (GLTV…FALI), 170 to 190 (LVRI…LLFI), 250 to 270 (LTNM…CFAF), 283 to 303 (LLWA…SAEV), 329 to 349 (VLVS…AVIA), 356 to 376 (ALGG…FGGV), 379 to 399 (GLYG…LMIG), 416 to 436 (MTAL…ALAM), 484 to 504 (LLAF…MAIA), and 524 to 544 (GALF…LTFI).

Belongs to the KdpA family. As to quaternary structure, the system is composed of three essential subunits: KdpA, KdpB and KdpC.

The protein localises to the cell inner membrane. In terms of biological role, part of the high-affinity ATP-driven potassium transport (or Kdp) system, which catalyzes the hydrolysis of ATP coupled with the electrogenic transport of potassium into the cytoplasm. This subunit binds the periplasmic potassium ions and delivers the ions to the membrane domain of KdpB through an intramembrane tunnel. The sequence is that of Potassium-transporting ATPase potassium-binding subunit from Citrobacter koseri (strain ATCC BAA-895 / CDC 4225-83 / SGSC4696).